A 238-amino-acid chain; its full sequence is Ribonuclease PH (238 aa).

Phosphate is bound by residues R86 and 124–126 (GTR).

The protein belongs to the RNase PH family. Homohexameric ring arranged as a trimer of dimers.

The catalysed reaction is tRNA(n+1) + phosphate = tRNA(n) + a ribonucleoside 5'-diphosphate. Functionally, phosphorolytic 3'-5' exoribonuclease that plays an important role in tRNA 3'-end maturation. Removes nucleotide residues following the 3'-CCA terminus of tRNAs; can also add nucleotides to the ends of RNA molecules by using nucleoside diphosphates as substrates, but this may not be physiologically important. Probably plays a role in initiation of 16S rRNA degradation (leading to ribosome degradation) during starvation. This Pasteurella multocida (strain Pm70) protein is Ribonuclease PH.